A 117-amino-acid polypeptide reads, in one-letter code: MSGEVSYYAGQTAEEAVARIYDRSGRPVAARRWRGVSGEIDLIAREGAEVIFIEVKKSTSHAAAAARLSRRQMDRIYGAASEFLAGEPRGQLTASRFDVALVDALGRVEIIENAFAA.

It belongs to the UPF0102 family.

The polypeptide is UPF0102 protein RHOS4_03930 (Cereibacter sphaeroides (strain ATCC 17023 / DSM 158 / JCM 6121 / CCUG 31486 / LMG 2827 / NBRC 12203 / NCIMB 8253 / ATH 2.4.1.) (Rhodobacter sphaeroides)).